Consider the following 617-residue polypeptide: Secretogranin-2 (617 aa).

A signal peptide spans 1–27 (MAEAKTHWLGAALSLIPLIFLISGAEA). A propeptide spanning residues 28–30 (ASF) is cleaved from the precursor. The segment at 123–147 (NEPQSVPKENKPHALNSEKNFPIDM) is disordered. Y151 is modified (sulfotyrosine). Phosphoserine occurs at positions 174, 268, 432, 532, 555, and 556. The disordered stretch occupies residues 552–583 (NQGSSQETDKLAPVSKRFPVGPPKNDDTPNRQ).

The protein belongs to the chromogranin/secretogranin protein family. In terms of assembly, interacts with Secretogranin III/SCG3.

Its subcellular location is the secreted. Neuroendocrine protein of the granin family that regulates the biogenesis of secretory granules. The protein is Secretogranin-2 (SCG2) of Macaca fascicularis (Crab-eating macaque).